Here is a 409-residue protein sequence, read N- to C-terminus: MSNIWSKEETLWSFALYGTAVGAGTLFLPIQLGSAGAVVLFITALVAWPLTYWPHKALCQFILSSKTSAGEGITGAVTHYYGKKIGNLITTLYFIAFFVVVLIYAVAITNSLTEQLAKHMVIDLRIRMLVSLGVVLILNLIFLMGRHATIRVMGFLVFPLIAYFLFLSIYLVGSWQPDLLTTQVEFNQNTLHQIWISIPVMVFAFSHTPIISTFAIDRREKYGEHAMDKCKKIMKVAYLIICISVLFFVFSCLLSIPPSYIEAAKEEGVTILSALSMLPNAPAWLSISGIIVAVVAMSKSFLGTYFGVIEGATEVVKTTLQQVGVKKSRAFNRALSIMLVSLITFIVCCINPNAISMIYAISGPLIAMILFIMPTLSTYLIPALKPWRSIGNLITLIVGILCVSVMFFS.

Residues 1–25 (MSNIWSKEETLWSFALYGTAVGAGT) are Periplasmic-facing. The helical transmembrane segment at 26–46 (LFLPIQLGSAGAVVLFITALV) threads the bilayer. Residues 47-87 (AWPLTYWPHKALCQFILSSKTSAGEGITGAVTHYYGKKIGN) are Cytoplasmic-facing. Residues 88–108 (LITTLYFIAFFVVVLIYAVAI) form a helical membrane-spanning segment. Residues 109–127 (TNSLTEQLAKHMVIDLRIR) lie on the Periplasmic side of the membrane. The chain crosses the membrane as a helical span at residues 128 to 148 (MLVSLGVVLILNLIFLMGRHA). Over 149–151 (TIR) the chain is Cytoplasmic. Residues 152–172 (VMGFLVFPLIAYFLFLSIYLV) traverse the membrane as a helical segment. Topologically, residues 173 to 193 (GSWQPDLLTTQVEFNQNTLHQ) are periplasmic. Residues 194-214 (IWISIPVMVFAFSHTPIISTF) form a helical membrane-spanning segment. The Cytoplasmic segment spans residues 215-235 (AIDRREKYGEHAMDKCKKIMK). The helical transmembrane segment at 236-256 (VAYLIICISVLFFVFSCLLSI) threads the bilayer. Residues 257 to 276 (PPSYIEAAKEEGVTILSALS) lie on the Periplasmic side of the membrane. Residues 277-297 (MLPNAPAWLSISGIIVAVVAM) form a helical membrane-spanning segment. Residues 298 to 329 (SKSFLGTYFGVIEGATEVVKTTLQQVGVKKSR) are Cytoplasmic-facing. A helical membrane pass occupies residues 330–350 (AFNRALSIMLVSLITFIVCCI). At 351–353 (NPN) the chain is on the periplasmic side. The chain crosses the membrane as a helical span at residues 354–374 (AISMIYAISGPLIAMILFIMP). The Cytoplasmic portion of the chain corresponds to 375–388 (TLSTYLIPALKPWR). A helical transmembrane segment spans residues 389-409 (SIGNLITLIVGILCVSVMFFS).

It belongs to the amino acid/polyamine transporter 2 family. SdaC/TdcC subfamily.

It localises to the cell inner membrane. The chain is Inner membrane transport protein YqeG (yqeG) from Escherichia coli O6:H1 (strain CFT073 / ATCC 700928 / UPEC).